The sequence spans 530 residues: UDP-glucuronosyltransferase 1A9 (530 aa).

Positions 1–25 are cleaved as a signal peptide; the sequence is MACTGWTSPLPLCVCLLLTCGFAEA. N71 carries an N-linked (GlcNAc...) asparagine glycan. An N6-succinyllysine modification is found at K99. Residues N292 and N344 are each glycosylated (N-linked (GlcNAc...) asparagine). Residues 488-504 form a helical membrane-spanning segment; the sequence is VIGFLLAVVLTVAFITF.

This sequence belongs to the UDP-glycosyltransferase family. Homodimer. Homooligomer. Interacts with UGT1A1, UGT1A3, UGT1A4, UGT1A6, UGT1A7, UGT1A8 and UGT1A10 to form heterodimers. Isoform 1 interacts with isoform 2/i2 suggesting that oligomerization is involved in negative regulation of transferase activity by isoform 2. Isoform 1 also interacts with respective i2 isoforms of UGT1A1, UGT1A3, UGT1A4, UGT1A6, UGT1A7, UGT1A8 and UGT1A10. Expressed in liver, kidney, colon, esophagus and small intestine.

Its subcellular location is the endoplasmic reticulum membrane. It carries out the reaction glucuronate acceptor + UDP-alpha-D-glucuronate = acceptor beta-D-glucuronoside + UDP + H(+). The enzyme catalyses 2-hydroxy-17beta-estradiol + UDP-alpha-D-glucuronate = 2-hydroxy-17beta-estradiol 3-O-(beta-D-glucuronate) + UDP + H(+). The catalysed reaction is 4-hydroxy-17beta-estradiol + UDP-alpha-D-glucuronate = 17beta-estradiol 4-O-(beta-D-glucuronate) + UDP + H(+). It catalyses the reaction 2-hydroxyestrone + UDP-alpha-D-glucuronate = 2-hydroxyestrone 3-O-(beta-D-glucuronate) + UDP + H(+). It carries out the reaction 4-hydroxyestrone + UDP-alpha-D-glucuronate = estrone 4-O-(beta-D-glucuronate) + UDP + H(+). The enzyme catalyses prunetin + UDP-alpha-D-glucuronate = prunetin-5-O-beta-D-glucuronide + UDP. The catalysed reaction is 8-iso-prostaglandin F2alpha + UDP-alpha-D-glucuronate = 8-iso-prostaglandin F2alpha-glucuronide + UDP + H(+). It catalyses the reaction 5-epi-5-F2t-IsoP + UDP-alpha-D-glucuronate = 5-epi-5-F2t-IsoP-glucuronide + UDP + H(+). It carries out the reaction (5Z,8Z,11Z,14Z)-eicosatetraenoate + UDP-alpha-D-glucuronate = O-[(5Z),(8Z),(11Z),(14Z)-eicosatetraenoyl]-beta-D-glucuronate + UDP. The enzyme catalyses 15-hydroxy-(5Z,8Z,11Z,13E)-eicosatetraenoate + UDP-alpha-D-glucuronate = 15-O-(beta-D-glucuronosyl)-(5Z,8Z,11Z,14Z)-eicosatetraenoate + UDP + H(+). The catalysed reaction is prostaglandin B1 + UDP-alpha-D-glucuronate = 15-O-(beta-D-glucuronosyl)-prostaglandin B1 + UDP + H(+). It catalyses the reaction (E)-ferulate + UDP-alpha-D-glucuronate = (E)-4-O-(beta-D-glucuronosyl)-ferulate + UDP + H(+). It carries out the reaction (E)-ferulate + UDP-alpha-D-glucuronate = (E)-ferulic acid beta-D-glucuronate ester + UDP. The enzyme catalyses candesartan + UDP-alpha-D-glucuronate = candesartan O-beta-D-glucuronoside + UDP. The catalysed reaction is SN-38 + UDP-alpha-D-glucuronate = SN-38 O-beta-D-glucuronide + UDP + H(+). It catalyses the reaction mycophenolate + UDP-alpha-D-glucuronate = mycophenolate 7-O-beta-D-glucuronide + UDP + H(+). In terms of biological role, UDP-glucuronosyltransferase (UGT) that catalyzes phase II biotransformation reactions in which lipophilic substrates are conjugated with glucuronic acid to increase the metabolite's water solubility, thereby facilitating excretion into either the urine or bile. Essential for the elimination and detoxification of drugs, xenobiotics and endogenous compounds. Catalyzes the glucuronidation of endogenous estrogen hormones such as estradiol and estrone. Involved in the glucuronidation of arachidonic acid (AA) and AA-derived eicosanoids including 15-HETE, PGB1 and F2-isoprostanes (8-iso-PGF2alpha and 5-epi-5-F2t-IsoP). Glucuronates the phytochemical ferulic acid efficently at both the phenolic or the carboxylic acid group. Also catalyzes the glucuronidation of the isoflavones genistein, daidzein, glycitein, formononetin, biochanin A and prunetin, which are phytoestrogens with anticancer and cardiovascular properties. Involved in the glucuronidation of the AGTR1 angiotensin receptor antagonist caderastan, a drug which can inhibit the effect of angiotensin II. Involved in the biotransformation of 7-ethyl-10-hydroxycamptothecin (SN-38), the pharmacologically active metabolite of the anticancer drug irinotecan. Also metabolizes mycophenolate, an immunosuppressive agent. Functionally, lacks UGT glucuronidation activity but acts as a negative regulator of isoform 1. This Homo sapiens (Human) protein is UDP-glucuronosyltransferase 1A9.